A 551-amino-acid polypeptide reads, in one-letter code: Chitinase (551 aa).

The signal sequence occupies residues 1 to 17; it reads MLYKLLNVLWLVAVSNA. Positions 1–149 are chitin binding domain (CBD); sequence MLYKLLNVLW…NKPGRREDKI (149 aa). Positions 148–548 constitute a GH18 domain; sequence KIVAAYFVEW…NAINAQFKPK (401 aa). A glycan (N-linked (GlcNAc...) asparagine; by host) is linked at Asn173. Catalysis depends on Glu305, which acts as the Proton donor. A glycan (N-linked (GlcNAc...) asparagine; by host) is linked at Asn444. Residues 548–551 carry the Prevents secretion from ER motif; the sequence is KDEL.

It belongs to the glycosyl hydrolase 18 family. Chitinase class II subfamily. As to quaternary structure, interacts with host VCATH.

Its subcellular location is the host endoplasmic reticulum lumen. It carries out the reaction Random endo-hydrolysis of N-acetyl-beta-D-glucosaminide (1-&gt;4)-beta-linkages in chitin and chitodextrins.. Its function is as follows. Plays a role in host liquefaction to facilitate horizontal transmission of the virus by hydrolyzing beta-chitin and by regulating the cysteine protease VCATH. Localized in the host reticulum endoplasmic via its KDEL motif, interacts with and thus prevents VCATH secretion before host cell lysis occurs. In Lepidoptera (butterflies and moths), this protein is Chitinase (CHIA).